The primary structure comprises 290 residues: 33 kDa chaperonin (290 aa).

2 cysteine pairs are disulfide-bonded: Cys235–Cys237 and Cys268–Cys271.

Belongs to the HSP33 family. Under oxidizing conditions two disulfide bonds are formed involving the reactive cysteines. Under reducing conditions zinc is bound to the reactive cysteines and the protein is inactive.

Its subcellular location is the cytoplasm. Redox regulated molecular chaperone. Protects both thermally unfolding and oxidatively damaged proteins from irreversible aggregation. Plays an important role in the bacterial defense system toward oxidative stress. The chain is 33 kDa chaperonin from Streptococcus pyogenes serotype M3 (strain ATCC BAA-595 / MGAS315).